We begin with the raw amino-acid sequence, 784 residues long: Rabenosyn-5 (784 aa).

Alanine 2 bears the N-acetylalanine mark. Residue serine 3 is modified to Phosphoserine. Residues 14 to 37 (FLCPLCLKDLQSFYQLHSHYEEEH) form a C2H2-type zinc finger. The tract at residues 100-263 (RSHLSDFKKH…HCKDTLLKRE (164 aa)) is necessary for the correct targeting to endosomes. The FYVE-type zinc finger occupies 157–260 (DQDVPFCPDC…CCTHCKDTLL (104 aa)). The Zn(2+) site is built by cysteine 163, cysteine 166, cysteine 179, cysteine 182, cysteine 187, and cysteine 190. The segment covering 207–224 (KESLSTHTSPSQSPNSVH) has biased composition (polar residues). A disordered region spans residues 207–241 (KESLSTHTSPSQSPNSVHGSRRGSISSMSSVSSVL). Serine 215, serine 219, serine 226, and serine 230 each carry phosphoserine. A compositionally biased stretch (low complexity) spans 228 to 240 (RGSISSMSSVSSV). Residues cysteine 252 and cysteine 255 each contribute to the Zn(2+) site. The necessary for interaction with RAB4A stretch occupies residues 264–500 (QQIDEKEHTP…QLQDEYDQQQ (237 aa)). Positions 264 to 784 (QQIDEKEHTP…TLAKQKGGTD (521 aa)) are necessary for interaction with EHD1. 2 coiled-coil regions span residues 378–414 (TKEQ…LEER) and 472–531 (QAKA…RELE). Basic and acidic residues predominate over residues 390-400 (KEEMERKRAVE). A disordered region spans residues 390 to 429 (KEEMERKRAVERQAALESQRRLEERQSGLASRAANGEVAS). Residues 496-515 (YDQQQTEKAIELSRRQAEEE) enclose the UIM domain. The tract at residues 574 to 732 (DLGSSPVPSS…DSDSGPEAEE (159 aa)) is disordered. The span at 579–598 (PVPSSTAPKTPSLSSTQPTR) shows a compositional bias: polar residues. The interval 627–784 (PFDEEDLSSP…TLAKQKGGTD (158 aa)) is necessary for interaction with RAB5A. Over residues 663 to 673 (PFEEEDEEEEA) the composition is skewed to acidic residues. Serine 684 bears the Phosphoserine mark. Positions 722–732 (MDSDSGPEAEE) are enriched in acidic residues.

As to quaternary structure, interacts with EHD1, RAB4A, RAB5A, RAB14, RAB22A, RAB24 and VPS45. Binds simultaneously to RAB4A and RAB5A in vitro. Interacts with RAB4A and RAB5A that has been activated by GTP binding.

It is found in the cell membrane. Its subcellular location is the early endosome membrane. Rab4/Rab5 effector protein acting in early endocytic membrane fusion and membrane trafficking of recycling endosomes. Required for endosome fusion either homotypically or with clathrin coated vesicles. Plays a role in the lysosomal trafficking of CTSD/cathepsin D from the Golgi to lysosomes. Also promotes the recycling of transferrin directly from early endosomes to the plasma membrane. Binds phospholipid vesicles containing phosphatidylinositol 3-phosphate (PtdInsP3). Plays a role in the recycling of transferrin receptor to the plasma membrane. The polypeptide is Rabenosyn-5 (Homo sapiens (Human)).